The sequence spans 272 residues: CD40 ligand (272 aa).

Residues 1–23 (MNEAYSPAAPRPMGSTSPSTMKM) lie on the Cytoplasmic side of the membrane. Residues 24–44 (FMCFLSVFMVVQTIGTVLFCL) form a helical; Signal-anchor for type II membrane protein membrane-spanning segment. At 45–272 (YLHMKMDKME…GNTYFGMFKL (228 aa)) the chain is on the extracellular side. Residues Asn-124 and Asn-146 are each glycosylated (N-linked (GlcNAc...) asparagine). The THD domain occupies 136–272 (IATHLAGVKS…GNTYFGMFKL (137 aa)). The cysteines at positions 190 and 229 are disulfide-linked. Asn-251 is a glycosylation site (N-linked (GlcNAc...) asparagine).

The protein belongs to the tumor necrosis factor family. In terms of assembly, homotrimer. Interacts with CD28. CD40 ligand, soluble form: Exists as either a monomer or a homotrimer. Forms a ternary complex between CD40 and integrins for CD40-CD40LG signaling. The soluble form derives from the membrane form by proteolytic processing.

The protein resides in the cell membrane. It is found in the cell surface. It localises to the secreted. Its function is as follows. Cytokine that acts as a ligand to CD40/TNFRSF5. Costimulates T-cell proliferation and cytokine production. Induces the activation of NF-kappa-B. Mediates B-cell proliferation in the absence of co-stimulus as well as IgE production in the presence of IL4. Involved in immunoglobulin class switching. Acts as a ligand for integrins, specifically ITGA5:ITGB1 and ITGAV:ITGB3; both integrins and the CD40 receptor are required for activation of CD40-CD40LG signaling, which have cell-type dependent effects, such as B-cell activation, NF-kappa-B signaling and anti-apoptotic signaling. This is CD40 ligand (CD40LG) from Gallus gallus (Chicken).